We begin with the raw amino-acid sequence, 149 residues long: MADQLTDEQIAEFKEAFSLFDKDGDGCITTKELGTVMRSLGQNPTEAELQDMINEVDADGNGTIDFPEFLNLMAKKMKDTDSEEELKEAFRVFDKDQNGFISAAELRHVMTNLGEKLTDEEVDEMIREADVDGDGQINYEEFVKVMMAK.

The residue at position 2 (A2) is an N-acetylalanine. EF-hand domains follow at residues E8 to N43, P44 to D79, D81 to K116, and L117 to K149. 14 residues coordinate Ca(2+): D21, D23, D25, C27, E32, D57, D59, N61, T63, E68, D94, D96, N98, and E105. Position 116 is an N6,N6,N6-trimethyllysine (K116). Positions 130, 132, 134, 136, and 141 each coordinate Ca(2+).

The protein belongs to the calmodulin family.

Its function is as follows. Calmodulin mediates the control of a large number of enzymes, ion channels and other proteins by Ca(2+). Among the enzymes to be stimulated by the calmodulin-Ca(2+) complex are a number of protein kinases and phosphatases. This is Calmodulin-2 (CAM2) from Oryza sativa subsp. indica (Rice).